Here is a 210-residue protein sequence, read N- to C-terminus: RNA chaperone ProQ (210 aa).

A compositionally biased stretch (basic and acidic residues) spans 98 to 127 (HAKASLEESKAKVAARRKEQAKKAREEAKA). Positions 98–155 (HAKASLEESKAKVAARRKEQAKKAREEAKAKKPARATTPPKRRPQPAAVAKKQEKPVE) are disordered.

This sequence belongs to the ProQ family.

It is found in the cytoplasm. Functionally, RNA chaperone with significant RNA binding, RNA strand exchange and RNA duplexing activities. The sequence is that of RNA chaperone ProQ from Aliivibrio salmonicida (strain LFI1238) (Vibrio salmonicida (strain LFI1238)).